A 226-amino-acid polypeptide reads, in one-letter code: N-acetyltransferase family 8 member 2 (226 aa).

A run of 2 helical transmembrane segments spans residues Phe33–Leu55 and Trp60–Cys82. Positions Leu69–Val221 constitute an N-acetyltransferase domain. Lys204 carries the N6-acetyllysine modification.

Belongs to the camello family.

It localises to the membrane. In terms of biological role, probable acetyltransferase. Has no detectable histone acetyltransferase activity towards histone H3 or H4. This is N-acetyltransferase family 8 member 2 from Rattus norvegicus (Rat).